The chain runs to 358 residues: Putative spore germination protein YfkT (358 aa).

Transmembrane regions (helical) follow at residues 10–30 (LFFG…ILMI), 36–56 (NAWH…WLMH), 81–101 (IIIL…IRFF), 107–127 (ILFL…FVAI), 143–163 (IFLF…ATQI), 179–199 (LQSG…PLLF), 210–230 (IFAI…SISV), 262–282 (IIAA…LYIV), 297–317 (AMYT…FLNT), and 326–346 (IKPI…YLII).

This sequence belongs to the amino acid-polyamine-organocation (APC) superfamily. Spore germination protein (SGP) (TC 2.A.3.9) family.

The protein localises to the cell membrane. Its function is as follows. May be involved in spore germination. This is Putative spore germination protein YfkT (yfkT) from Bacillus subtilis (strain 168).